Consider the following 451-residue polypeptide: Chromosomal replication initiator protein DnaA (451 aa).

The domain I, interacts with DnaA modulators stretch occupies residues 1–72 (MQSIEDIWQE…ANILQEITGR (72 aa)). The tract at residues 72-108 (RLFDVRFIDGEQEENFEYTVIKPNPALDEDGVEIGKH) is domain II. Positions 109 to 325 (MLNPRYVFDT…GALIRVVAYS (217 aa)) are domain III, AAA+ region. Residues glycine 153, glycine 155, lysine 156, and threonine 157 each coordinate ATP. The interval 326–451 (SLVNKDITAG…KNLRKAQNMF (126 aa)) is domain IV, binds dsDNA.

It belongs to the DnaA family. In terms of assembly, oligomerizes as a right-handed, spiral filament on DNA at oriC.

It is found in the cytoplasm. In terms of biological role, plays an essential role in the initiation and regulation of chromosomal replication. ATP-DnaA binds to the origin of replication (oriC) to initiate formation of the DNA replication initiation complex once per cell cycle. Binds the DnaA box (a 9 base pair repeat at the origin) and separates the double-stranded (ds)DNA. Forms a right-handed helical filament on oriC DNA; dsDNA binds to the exterior of the filament while single-stranded (ss)DNA is stabiized in the filament's interior. The ATP-DnaA-oriC complex binds and stabilizes one strand of the AT-rich DNA unwinding element (DUE), permitting loading of DNA polymerase. After initiation quickly degrades to an ADP-DnaA complex that is not apt for DNA replication. Binds acidic phospholipids. The polypeptide is Chromosomal replication initiator protein DnaA (Listeria monocytogenes serotype 4b (strain CLIP80459)).